Consider the following 172-residue polypeptide: MQNKPSSYDREDLLASSRGELFGPNGPQLPAPNMLMMDRIPLMSETEGLFGKGKVIAELDITPDLWFFDCHFPGDPVMPGCLGLDAMWQLVGFFLGWVGGQGKGRALGVGEVKFTGQVLPTAKKVTYEIDFKRVINRKLVMGLADGRVLVDGKEIYVAKDLKVGLFQDTSAF.

Histidine 71 is a catalytic residue.

Belongs to the thioester dehydratase family. FabA subfamily. As to quaternary structure, homodimer.

The protein localises to the cytoplasm. It carries out the reaction a (3R)-hydroxyacyl-[ACP] = a (2E)-enoyl-[ACP] + H2O. The enzyme catalyses (3R)-hydroxydecanoyl-[ACP] = (2E)-decenoyl-[ACP] + H2O. It catalyses the reaction (2E)-decenoyl-[ACP] = (3Z)-decenoyl-[ACP]. Its pathway is lipid metabolism; fatty acid biosynthesis. Its function is as follows. Necessary for the introduction of cis unsaturation into fatty acids. Catalyzes the dehydration of (3R)-3-hydroxydecanoyl-ACP to E-(2)-decenoyl-ACP and then its isomerization to Z-(3)-decenoyl-ACP. Can catalyze the dehydratase reaction for beta-hydroxyacyl-ACPs with saturated chain lengths up to 16:0, being most active on intermediate chain length. In Aliivibrio salmonicida (strain LFI1238) (Vibrio salmonicida (strain LFI1238)), this protein is 3-hydroxydecanoyl-[acyl-carrier-protein] dehydratase.